A 346-amino-acid polypeptide reads, in one-letter code: Dihydroorotase (346 aa).

His14 and His16 together coordinate Zn(2+). Residues His16–Arg18 and Asn42 contribute to the substrate site. Residues Lys100, His137, and His175 each coordinate Zn(2+). Lys100 bears the N6-carboxylysine mark. His137 contacts substrate. Residue Leu220 participates in substrate binding. Asp248 lines the Zn(2+) pocket. Residue Asp248 is part of the active site. Residues His252 and Ala264 each contribute to the substrate site.

This sequence belongs to the metallo-dependent hydrolases superfamily. DHOase family. Class II DHOase subfamily. As to quaternary structure, homodimer. Requires Zn(2+) as cofactor.

It carries out the reaction (S)-dihydroorotate + H2O = N-carbamoyl-L-aspartate + H(+). It participates in pyrimidine metabolism; UMP biosynthesis via de novo pathway; (S)-dihydroorotate from bicarbonate: step 3/3. In terms of biological role, catalyzes the reversible cyclization of carbamoyl aspartate to dihydroorotate. The polypeptide is Dihydroorotase (Cereibacter sphaeroides (strain ATCC 17025 / ATH 2.4.3) (Rhodobacter sphaeroides)).